The primary structure comprises 277 residues: Large ribosomal subunit protein uL2c (277 aa).

The tract at residues 225-277 (MNPCDHPHGGGEGRSPIGRPKPVTPWGKPALGKKTRSPKRFSNKYIIRSRKMV) is disordered. A compositionally biased stretch (basic residues) spans 255-277 (LGKKTRSPKRFSNKYIIRSRKMV).

It belongs to the universal ribosomal protein uL2 family. In terms of assembly, part of the 50S ribosomal subunit.

The protein resides in the plastid. It localises to the chloroplast. The protein is Large ribosomal subunit protein uL2c (rpl2) of Euglena gracilis.